The chain runs to 590 residues: Complement component C8 beta chain (590 aa).

Residues 1–32 (MKKSWTWTWRVPAELLLLCAALGCLCVPGSRS) form the signal peptide. Residues 33–54 (ERPRSLEPTVVNRSLAKSRHSR) constitute a propeptide that is removed on maturation. N-linked (GlcNAc...) asparagine glycosylation is present at Asn-44. One can recognise a TSP type-1 1 domain in the interval 64–117 (DCELSSWSSWTMCDPCQKKRYRHAYLLRPSQFNGEPCNFSDKEVEDCATSRPCR). 7 disulfide bridges follow: Cys-65/Cys-100, Cys-76/Cys-110, Cys-79/Cys-116, Cys-122/Cys-133, Cys-127/Cys-146, Cys-140/Cys-155, and Cys-162/Cys-200. 2 C-linked (Man) tryptophan glycosylation sites follow: Trp-70 and Trp-73. A glycan (N-linked (GlcNAc...) asparagine) is linked at Asn-101. An LDL-receptor class A domain is found at 120 to 157 (VRCEGFVCAQTGRCVNRRLLCNGDNDCGDQSDEANCRK). Leu-138, Asn-141, Asp-143, Asp-145, Asp-151, and Glu-152 together coordinate Ca(2+). One can recognise an MACPF domain in the interval 158 to 504 (IYKKCHHEME…EFQGEVSPCR (347 aa)). The next 4 beta stranded transmembrane spans lie at 252–259 (STFNLGFK), 262–269 (SIFEFGIN), 379–386 (AKNDFKLG), and 392–399 (VYVSLGVS). Residues Cys-378 and Cys-403 are joined by a disulfide bond. Thr-418 is modified (phosphothreonine). 4 disulfides stabilise this stretch: Cys-503-Cys-550, Cys-505-Cys-521, Cys-508-Cys-523, and Cys-525-Cys-534. The EGF-like domain maps to 505–535 (CAPCQGNGVPVQKGSRCDCICPVGFQGSACE). One can recognise a TSP type-1 2 domain in the interval 545-588 (DGRWSCWSRWSSCSGGQKTRRRQCNNPAPQDGGSPCSGPASETL). 2 C-linked (Man) tryptophan glycosylation sites follow: Trp-551 and Trp-554. Residues Cys-557 and Cys-590 are joined by a disulfide bond. The interval 557-590 (CSGGQKTRRRQCNNPAPQDGGSPCSGPASETLAC) is disordered.

Belongs to the complement C6/C7/C8/C9 family. As to quaternary structure, heterotrimer of 3 chains: alpha (C8A), beta (C8B) and gamma (C8G); the alpha and gamma chains are disulfide bonded. Component of the membrane attack complex (MAC), composed of complement C5b, C6, C7, C8A, C8B, C8G and multiple copies of the pore-forming subunit C9. N-glycosylated; contains one or two bound glycans. Not O-glycosylated.

It is found in the secreted. The protein localises to the target cell membrane. Its activity is regulated as follows. Membrane attack complex (MAC) assembly is inhibited by CD59, thereby protecting self-cells from damage during complement activation. CD59 acts by binding to the beta-haipins of C8 (C8A and C8B), forming an intermolecular beta-sheet that prevents incorporation of the multiple copies of C9 required for complete formation of the osmolytic pore. MAC assembly is also inhibited by clusterin (CLU) chaperones that inhibit polymerization of C9. In terms of biological role, component of the membrane attack complex (MAC), a multiprotein complex activated by the complement cascade, which inserts into a target cell membrane and forms a pore, leading to target cell membrane rupture and cell lysis. The MAC is initiated by proteolytic cleavage of C5 into complement C5b in response to the classical, alternative, lectin and GZMK complement pathways. The complement pathways consist in a cascade of proteins that leads to phagocytosis and breakdown of pathogens and signaling that strengthens the adaptive immune system. C8B, together with C8A and C8G, inserts into the target membrane, but does not form pores by itself. During MAC assembly, associates with C5b, C6 and C7 to form the C5b8 intermediate complex that inserts into the target membrane and traverses the bilayer increasing membrane rigidity. This chain is Complement component C8 beta chain (C8B), found in Oryctolagus cuniculus (Rabbit).